A 235-amino-acid polypeptide reads, in one-letter code: Endonuclease V (235 aa).

Residues Asp-47 and Asp-115 each coordinate Mg(2+).

The protein belongs to the endonuclease V family. Requires Mg(2+) as cofactor.

It localises to the cytoplasm. The catalysed reaction is Endonucleolytic cleavage at apurinic or apyrimidinic sites to products with a 5'-phosphate.. In terms of biological role, DNA repair enzyme involved in the repair of deaminated bases. Selectively cleaves double-stranded DNA at the second phosphodiester bond 3' to a deoxyinosine leaving behind the intact lesion on the nicked DNA. This chain is Endonuclease V, found in Myxococcus xanthus (strain DK1622).